The chain runs to 459 residues: E3 ubiquitin-protein ligase RNF14 (459 aa).

The RWD domain maps to 10–129 (DELLALASIY…QFLKEETLDF (120 aa)). The tract at residues 141 to 169 (SGSQPQCEPAQKHAADASGEKSKVQDLDP) is disordered. Residues 150–169 (AQKHAADASGEKSKVQDLDP) show a composition bias toward basic and acidic residues. The segment at 200–441 (KAFCCGICYS…NPDSPCYNQL (242 aa)) is TRIAD supradomain. Positions 204, 207, 222, 224, 227, 230, 249, 254, 293, 298, 313, 316, 321, 324, 329, 334, 388, and 391 each coordinate Zn(2+). 2 RING-type zinc fingers span residues 204–249 (CGIC…CLNC) and 204–254 (CGIC…EPKC). The segment at 273–334 (ARYDRLLLQS…RRSYHGLSHC (62 aa)) adopts an IBR-type zinc-finger fold. Residues 388 to 417 (CPCCGTNIQKAHGCNKMTCSSCQKYFCWIC) form an RING-type 2; atypical zinc finger. Cys-401 is a catalytic residue. 6 residues coordinate Zn(2+): Cys-406, Cys-409, Cys-414, Cys-417, His-429, and Cys-437.

This sequence belongs to the RBR family. RNF14 subfamily.

It localises to the cytoplasm. It is found in the nucleus. It catalyses the reaction [E2 ubiquitin-conjugating enzyme]-S-ubiquitinyl-L-cysteine + [acceptor protein]-L-lysine = [E2 ubiquitin-conjugating enzyme]-L-cysteine + [acceptor protein]-N(6)-ubiquitinyl-L-lysine.. Its pathway is protein modification; protein ubiquitination. In terms of biological role, E3 ubiquitin-protein ligase that plays a key role in the RNF14-RNF25 translation quality control pathway, a pathway that takes place when a ribosome has stalled during translation, and which promotes ubiquitination and degradation of translation factors on stalled ribosomes. Recruited to stalled ribosomes by the ribosome collision sensor GCN1 and mediates 'Lys-6'-linked ubiquitination of target proteins, leading to their degradation. Mediates ubiquitination of eef1a1/eEF1A and etf1/eRF1 translation factors on stalled ribosomes, leading to their degradation. Specifically required to resolve RNA-protein cross-links caused by reactive aldehydes, which trigger translation stress by stalling ribosomes: acts by catalying 'Lys-6'-linked ubiquitination of RNA-protein cross-links, leading to their removal by the ATP-dependent unfoldase VCP and subsequent degradation by the proteasome. Independently of its function in the response to stalled ribosomes, acts as a regulator of transcription in Wnt signaling via its interaction with TCF transcription factors (tcf7/tcf1, tcf7l1/tcf3 and tcf7l2/tcf4). The protein is E3 ubiquitin-protein ligase RNF14 of Danio rerio (Zebrafish).